The primary structure comprises 458 residues: Tissue-resident T-cell transcription regulator protein ZNF683 (458 aa).

Disordered stretches follow at residues 84-109 (PQDL…TDSE) and 249-275 (TLHS…APTR). 3 C2H2-type zinc fingers span residues 301–323 (YECN…LRVH), 329–351 (FQCA…HLVH), and 357–379 (HQCQ…LRLH).

This sequence belongs to the krueppel C2H2-type zinc-finger protein family. Expressed in tissue-resident memory T (Trm) cell population in non-lymphoid organs, such as skin and gut. Expressed in innate lymphocytes, including tissue-resident natural killer (trNK) and natural killer T (NKT) cells in thymus, spleen and liver.

The protein resides in the nucleus. Transcription factor that mediates a transcriptional program in various innate and adaptive immune tissue-resident lymphocyte T-cell types such as tissue-resident memory T (Trm), natural killer (trNK) and natural killer T (NKT) cells and negatively regulates gene expression of proteins that promote the egress of tissue-resident T-cell populations from non-lymphoid organs. Plays a role in the development, retention and long-term establishment of adaptive and innate tissue-resident lymphocyte T-cell types in non-lymphoid organs, such as the skin and gut, but also in other nonbarrier tissues like liver and kidney, and therefore may provide immediate immunological protection against reactivating infections or viral reinfection. Also plays a role in the differentiation of both thymic and peripheral NKT cells. Negatively regulates the accumulation of interferon-gamma (IFN-gamma) in NKT cells at steady state or after antigenic stimulation. Positively regulates granzyme B production in NKT cells after innate stimulation. Associates with the transcriptional repressor PRDM1/BLIMP1 to chromatin at gene promoter regions. The protein is Tissue-resident T-cell transcription regulator protein ZNF683 of Mus musculus (Mouse).